A 396-amino-acid polypeptide reads, in one-letter code: Elongation factor Tu (396 aa).

The 197-residue stretch at 10–206 (KPHVNVGTIG…ALDSYIPEPT (197 aa)) folds into the tr-type G domain. The tract at residues 19–26 (GHVDHGKT) is G1. A GTP-binding site is contributed by 19 to 26 (GHVDHGKT). Threonine 26 serves as a coordination point for Mg(2+). A G2 region spans residues 60 to 64 (GITIS). Residues 81–84 (DCPG) are G3. GTP is bound by residues 81-85 (DCPGH) and 136-139 (NKAD). The G4 stretch occupies residues 136-139 (NKAD). Residues 174 to 176 (SAL) are G5.

This sequence belongs to the TRAFAC class translation factor GTPase superfamily. Classic translation factor GTPase family. EF-Tu/EF-1A subfamily. As to quaternary structure, monomer.

Its subcellular location is the cytoplasm. The catalysed reaction is GTP + H2O = GDP + phosphate + H(+). In terms of biological role, GTP hydrolase that promotes the GTP-dependent binding of aminoacyl-tRNA to the A-site of ribosomes during protein biosynthesis. This Hydrogenovibrio crunogenus (strain DSM 25203 / XCL-2) (Thiomicrospira crunogena) protein is Elongation factor Tu.